An 84-amino-acid chain; its full sequence is Mu-Sparatoxin-Hp1 (84 aa).

An N-terminal signal peptide occupies residues 1 to 20 (MKIAIVMTLLLVAFSTASFA). A propeptide spanning residues 21–35 (IEPIERAALDLVMAR) is cleaved from the precursor. Intrachain disulfides connect Cys-54-Cys-68, Cys-61-Cys-73, and Cys-67-Cys-78. Leu-82 bears the Leucine amide mark.

Expressed by the venom gland.

It is found in the secreted. Weakly nhibits voltage-gated sodium channels Nav1.7/SCN9A. High concentration of the toxin (3 uM) inhibits Nav1.7/SCN9A currents by 79%. The chain is Mu-Sparatoxin-Hp1 from Heteropoda pingtungensis (Pingtung huntsman spider).